A 36-amino-acid chain; its full sequence is Asteropin-A (36 aa).

Cystine bridges form between C2–C18, C9–C25, and C17–C35.

Sialidase inhibitor. Competitively inhibits bacterial sialidases, but not viral sialidases. Does not inhibit glycosidases or proteases. Has no antitumor activity. This chain is Asteropin-A, found in Asteropus simplex (Marine sponge).